The primary structure comprises 68 residues: Elastase inhibitor AFLEI (68 aa).

Cys-5 and Cys-67 are oxidised to a cystine.

The protein resides in the secreted. Elastase inhibitor. Inhibitor of A.flavus elastase with a Ki of 40 nM. Inhibitor of A.fumigatus elastase and human leukocyte elastase. Inhibits the fibrinogenase and collagenase activities of A.flavus elastase. Does not inhibit porcine pancreatic elastase, trypsin, chymotrypsin, thrombin or A.acutus AC1-proteinase. The polypeptide is Elastase inhibitor AFLEI (Aspergillus flavus).